We begin with the raw amino-acid sequence, 341 residues long: Anthranilate phosphoribosyltransferase (341 aa).

5-phospho-alpha-D-ribose 1-diphosphate is bound by residues Gly-81, 84–85, Thr-89, 91–94, 109–117, and Ser-121; these read GD, NIST, and KHGSRSVSG. Gly-81 provides a ligand contact to anthranilate. Ser-93 provides a ligand contact to Mg(2+). Position 167 (Arg-167) interacts with anthranilate. Mg(2+) is bound by residues Asp-226 and Glu-227.

Belongs to the anthranilate phosphoribosyltransferase family. In terms of assembly, homodimer. Requires Mg(2+) as cofactor.

It catalyses the reaction N-(5-phospho-beta-D-ribosyl)anthranilate + diphosphate = 5-phospho-alpha-D-ribose 1-diphosphate + anthranilate. It functions in the pathway amino-acid biosynthesis; L-tryptophan biosynthesis; L-tryptophan from chorismate: step 2/5. Functionally, catalyzes the transfer of the phosphoribosyl group of 5-phosphorylribose-1-pyrophosphate (PRPP) to anthranilate to yield N-(5'-phosphoribosyl)-anthranilate (PRA). This is Anthranilate phosphoribosyltransferase from Methylococcus capsulatus (strain ATCC 33009 / NCIMB 11132 / Bath).